Here is an 88-residue protein sequence, read N- to C-terminus: Small ribosomal subunit protein uS15c (88 aa).

This sequence belongs to the universal ribosomal protein uS15 family. Part of the 30S ribosomal subunit.

The protein localises to the plastid. The protein resides in the chloroplast. This chain is Small ribosomal subunit protein uS15c (rps15), found in Lobularia maritima (Sweet alyssum).